Reading from the N-terminus, the 98-residue chain is Late cornified envelope-like proline-rich protein 1 (98 aa).

The tract at residues 1–26 (MSSDDKSKSNDPKTEPKNCDPKCEQK) is disordered.

This sequence belongs to the cornifin (SPRR) family.

This is Late cornified envelope-like proline-rich protein 1 (LELP1) from Homo sapiens (Human).